The primary structure comprises 362 residues: Tyrosine recombinase XerH (362 aa).

A Core-binding (CB) domain is found at 43–140 (ECLNELNQAC…ALLGLFSYID (98 aa)). The Tyr recombinase domain maps to 170-357 (KLPTHLNNEE…DKQRLEEAAS (188 aa)). Active-site residues include Arg213, Lys239, His309, Arg312, and His335. Tyr344 serves as the catalytic O-(3'-phospho-DNA)-tyrosine intermediate.

It belongs to the 'phage' integrase family. XerH subfamily.

The protein resides in the cytoplasm. With respect to regulation, ftsK is required for recombination. Site-specific tyrosine recombinase, which acts by catalyzing the cutting and rejoining of the recombining DNA molecules. Involved in chromosome segregation. May contribute to chromosome decatenation. The sequence is that of Tyrosine recombinase XerH from Helicobacter pylori (strain ATCC 700392 / 26695) (Campylobacter pylori).